The sequence spans 255 residues: Tryptophan synthase alpha chain (255 aa).

Residues Glu-42 and Asp-53 each act as proton acceptor in the active site.

Belongs to the TrpA family. As to quaternary structure, tetramer of two alpha and two beta chains.

The enzyme catalyses (1S,2R)-1-C-(indol-3-yl)glycerol 3-phosphate + L-serine = D-glyceraldehyde 3-phosphate + L-tryptophan + H2O. The protein operates within amino-acid biosynthesis; L-tryptophan biosynthesis; L-tryptophan from chorismate: step 5/5. The alpha subunit is responsible for the aldol cleavage of indoleglycerol phosphate to indole and glyceraldehyde 3-phosphate. The protein is Tryptophan synthase alpha chain of Wolinella succinogenes (strain ATCC 29543 / DSM 1740 / CCUG 13145 / JCM 31913 / LMG 7466 / NCTC 11488 / FDC 602W) (Vibrio succinogenes).